The chain runs to 537 residues: Leucine-rich repeat LGI family member 4 (537 aa).

The N-terminal stretch at 1–19 is a signal peptide; that stretch reads MGGAGILLLLLAGAGVVVA. LRR repeat units lie at residues 53–74, 77–98, 101–122, and 125–146; these read TLLS…SFLR, SLHL…AFAG, HLQY…ALRG, and SLTH…LFRG. An LRRCT domain is found at 158–208; that stretch reads NPFQCDCRVLWLLQWMPTVNASVGTGACAGPASLSHMQLHHLDPKTFKCRA. The N-linked (GlcNAc...) asparagine glycan is linked to Asn-177. EAR repeat units follow at residues 210–252, 256–298, 302–349, 351–394, 396–439, 441–483, and 487–532; these read ELSW…SWDY, RFRP…ARPS, RLAP…CRDG, GFYP…HWTG, RFER…RWDG, MFRL…RLEP, and LLEP…QHHE.

In terms of assembly, can bind to ADAM11, ADAM22 and ADAM23. In terms of tissue distribution, widely expressed, with highest expression in brain.

The protein localises to the secreted. Functionally, component of Schwann cell signaling pathway(s) that controls axon segregation and myelin formation. The chain is Leucine-rich repeat LGI family member 4 (LGI4) from Homo sapiens (Human).